A 206-amino-acid polypeptide reads, in one-letter code: Pyridoxal 5'-phosphate synthase subunit PdxT (206 aa).

59–61 (GES) is an L-glutamine binding site. The Nucleophile role is filled by Cys-91. Residues Arg-123 and 151–152 (IR) each bind L-glutamine. Catalysis depends on charge relay system residues His-187 and Glu-189.

Belongs to the glutaminase PdxT/SNO family. In terms of assembly, in the presence of PdxS, forms a dodecamer of heterodimers. Only shows activity in the heterodimer.

It carries out the reaction aldehydo-D-ribose 5-phosphate + D-glyceraldehyde 3-phosphate + L-glutamine = pyridoxal 5'-phosphate + L-glutamate + phosphate + 3 H2O + H(+). It catalyses the reaction L-glutamine + H2O = L-glutamate + NH4(+). The protein operates within cofactor biosynthesis; pyridoxal 5'-phosphate biosynthesis. Its function is as follows. Catalyzes the hydrolysis of glutamine to glutamate and ammonia as part of the biosynthesis of pyridoxal 5'-phosphate. The resulting ammonia molecule is channeled to the active site of PdxS. This Mycobacterium sp. (strain KMS) protein is Pyridoxal 5'-phosphate synthase subunit PdxT.